Reading from the N-terminus, the 470-residue chain is 24-hydroxycholesterol 7-alpha-hydroxylase (470 aa).

2 helical membrane-spanning segments follow: residues Ile3–Phe23 and Val270–Ile290. Cys415 contacts heme.

This sequence belongs to the cytochrome P450 family. It depends on heme as a cofactor. In terms of tissue distribution, liver specific. Hepatic expression is sexually dimorphic (female &gt; male).

The protein localises to the endoplasmic reticulum membrane. It localises to the microsome membrane. The catalysed reaction is (24S)-hydroxycholesterol + reduced [NADPH--hemoprotein reductase] + O2 = (24S)-7alpha-dihydroxycholesterol + oxidized [NADPH--hemoprotein reductase] + H2O + H(+). The protein operates within steroid metabolism; cholesterol degradation. Its pathway is lipid metabolism; bile acid biosynthesis. A cytochrome P450 monooxygenase involved in neural cholesterol clearance through bile acid synthesis. Catalyzes 7-alpha hydroxylation of (24S)-hydroxycholesterol, a neural oxysterol that is metabolized to bile acids in the liver. Mechanistically, uses molecular oxygen inserting one oxygen atom into a substrate, and reducing the second into a water molecule, with two electrons provided by NADPH via cytochrome P450 reductase (CPR; NADPH-ferrihemoprotein reductase). The polypeptide is 24-hydroxycholesterol 7-alpha-hydroxylase (Cyp39a1) (Mus musculus (Mouse)).